The chain runs to 1077 residues: Insulin receptor substrate 2-B (1077 aa).

Residues 1–66 (MAGVLCPTEE…APASTAEDDV (66 aa)) are disordered. Short sequence motifs (YXXM motif) lie at residues 33-36 (YRRM) and 147-150 (YFAM). The region spanning 65 to 170 (DVRKRGYLRK…WYQALSELIN (106 aa)) is the PH domain. The IRS-type PTB domain occupies 195-299 (FKEVWQVNVK…DTMKALKAYS (105 aa)). Disordered regions lie at residues 342-373 (ETVV…RPFR), 428-464 (VCSS…SDEY), and 476-495 (VRSN…EENT). 2 stretches are compositionally biased toward polar residues: residues 350 to 364 (SAKN…SSEG) and 428 to 444 (VCSS…LTRP). Low complexity predominate over residues 445-457 (SSSSVCGSPSDGG). Polar residues predominate over residues 477 to 495 (RSNTPDSLGNTPPIQEENT). The YXXM motif 3 signature appears at 499–502 (YMSM). Polar residues predominate over residues 530–544 (KPTNAASQQKSQTAV). The disordered stretch occupies residues 530-571 (KPTNAASQQKSQTAVSLDEDSEETNKQFAYAESPKLKDSSHV). 6 consecutive short sequence motifs (YXXM motif) follow at residues 595-598 (YMPM), 608-611 (YLPM), 634-637 (YMMM), 666-669 (YMDM), 713-716 (YVPM), and 891-894 (YTTM).

Post-translationally, phosphorylated by INSR.

Functionally, potentiates insulin signaling. The polypeptide is Insulin receptor substrate 2-B (irs2-b) (Xenopus laevis (African clawed frog)).